We begin with the raw amino-acid sequence, 322 residues long: MLNSFKLSLQYILPKLWLTRLAGWGASKRAGWLTKLVIDLFVKYYKVDMTEAQKPDTASYRTFNDFFVRPLRDDVRPLNTDPNILVMPADGVISQLGRIEEDKILQAKGHNYSLEALLAGNYLMADKFRNGTFVTTYLSPRDYHRVHMPCNGILREMIYVPGDLFSVNYLTAQNVPNLFARNERVICLFDTEFGPMAQILVGATIVGSIETVWAGTITPPREGIIKRWTWPEGEHEGSVALLKGQEMGRFKLGSTVINLFAPGKVNLIASLASLSVTKIGQPLATSTETFVAPEVEPAPLPAEEIKAEHDASPLVDNKKDDT.

Residues Asp-90, His-147, and Ser-254 each act as charge relay system; for autoendoproteolytic cleavage activity in the active site. The active-site Schiff-base intermediate with substrate; via pyruvic acid; for decarboxylase activity is the Ser-254. Pyruvic acid (Ser); by autocatalysis is present on Ser-254. Positions Pro-297–Thr-322 are disordered. The span at Glu-303–Thr-322 shows a compositional bias: basic and acidic residues.

The protein belongs to the phosphatidylserine decarboxylase family. PSD-B subfamily. Prokaryotic type I sub-subfamily. Heterodimer of a large membrane-associated beta subunit and a small pyruvoyl-containing alpha subunit. It depends on pyruvate as a cofactor. In terms of processing, is synthesized initially as an inactive proenzyme. Formation of the active enzyme involves a self-maturation process in which the active site pyruvoyl group is generated from an internal serine residue via an autocatalytic post-translational modification. Two non-identical subunits are generated from the proenzyme in this reaction, and the pyruvate is formed at the N-terminus of the alpha chain, which is derived from the carboxyl end of the proenzyme. The autoendoproteolytic cleavage occurs by a canonical serine protease mechanism, in which the side chain hydroxyl group of the serine supplies its oxygen atom to form the C-terminus of the beta chain, while the remainder of the serine residue undergoes an oxidative deamination to produce ammonia and the pyruvoyl prosthetic group on the alpha chain. During this reaction, the Ser that is part of the protease active site of the proenzyme becomes the pyruvoyl prosthetic group, which constitutes an essential element of the active site of the mature decarboxylase.

It is found in the cell membrane. It carries out the reaction a 1,2-diacyl-sn-glycero-3-phospho-L-serine + H(+) = a 1,2-diacyl-sn-glycero-3-phosphoethanolamine + CO2. Its pathway is phospholipid metabolism; phosphatidylethanolamine biosynthesis; phosphatidylethanolamine from CDP-diacylglycerol: step 2/2. Its function is as follows. Catalyzes the formation of phosphatidylethanolamine (PtdEtn) from phosphatidylserine (PtdSer). The sequence is that of Phosphatidylserine decarboxylase proenzyme from Salmonella typhi.